Here is a 42-residue protein sequence, read N- to C-terminus: Hemoglobin subunit beta-A (42 aa).

The Globin domain occupies 2–42 (EWTDAERSAILSLWGKIDTDELGPALLARLXLVXXXTQRYF).

It belongs to the globin family. As to quaternary structure, heterotetramer of two alpha chains and two beta chains. In terms of tissue distribution, red blood cells.

In terms of biological role, involved in oxygen transport from gills to the various peripheral tissues. The polypeptide is Hemoglobin subunit beta-A (Catostomus clarkii (Desert sucker)).